The primary structure comprises 203 residues: Mitotic spindle assembly checkpoint protein MAD2A (203 aa).

The HORMA domain occupies 14–196; that stretch reads KGSTEIVTEF…TTIHKVESMV (183 aa). Positions 194–203 are required for assuming the closed conformation and for interaction with cdc20; that stretch reads SMVAYKISND.

The protein belongs to the MAD2 family. In terms of assembly, interacts with cdc20.

It localises to the nucleus. It is found in the chromosome. Its subcellular location is the centromere. The protein resides in the kinetochore. The protein localises to the cytoplasm. Component of the spindle-assembly checkpoint that prevents the onset of anaphase until all chromosomes are properly aligned at the metaphase plate. Required for the execution of the mitotic checkpoint which monitors the process of kinetochore-spindle attachment and inhibits the activity of the anaphase promoting complex until all chromosomes are aligned at the metaphase plate. This chain is Mitotic spindle assembly checkpoint protein MAD2A (mad2l1-1), found in Dictyostelium discoideum (Social amoeba).